Here is a 673-residue protein sequence, read N- to C-terminus: Glycine--tRNA ligase beta subunit (673 aa).

The protein belongs to the class-II aminoacyl-tRNA synthetase family. In terms of assembly, tetramer of two alpha and two beta subunits.

It localises to the cytoplasm. It catalyses the reaction tRNA(Gly) + glycine + ATP = glycyl-tRNA(Gly) + AMP + diphosphate. The chain is Glycine--tRNA ligase beta subunit from Lactococcus lactis subsp. lactis (strain IL1403) (Streptococcus lactis).